A 319-amino-acid polypeptide reads, in one-letter code: MDPQNQHGSGSSLVVIQQPALDNRQRLDYEREIQPAAILSLDQIKAIRGSNEYTEGPSVVKRPAPRTAPRQEKHERTHEIIPINVNNNYEHRPTSHLGHTGLSNNTRGPILSRSTSTGSAASSGSNSSASSEQGLLGRSPPTRPIPGHRSERAIRTQPKQLIVDDLKGSLKEDLTQHKFICEQCGKCKCGECTAPRTLPSCLACNRQCLCSAESMVEYGTCMCLVKGIFYHCSNDDEGDSYSDNPCSCSQSQCCSRYLCMGAMSLFLPCLLCYPPAKGCLKLCKGCYDWIHRPGCRCENSNTVYCKLESCSSRGLGKPS.

Met-1 is subject to N-acetylmethionine. The segment at Thr-54–Gln-160 is disordered. Positions Pro-69–Glu-79 are enriched in basic and acidic residues. Low complexity predominate over residues Ser-112–Ser-131. In terms of domain architecture, SPR spans Gln-183–Cys-295.

It belongs to the sprouty family. In terms of assembly, forms heterodimers with SPRY2. Interacts with TESK1. Interacts with CAV1 (via C-terminus).

It is found in the cytoplasm. The protein localises to the membrane. Functionally, inhibits fibroblast growth factor (FGF)-induced retinal lens fiber differentiation, probably by inhibiting FGF-mediated phosphorylation of ERK1/2. Inhibits TGFB-induced epithelial-to-mesenchymal transition in lens epithelial cells. The protein is Protein sprouty homolog 1 (SPRY1) of Cervus elaphus (Red deer).